The primary structure comprises 410 residues: O-methyltransferase afvC (410 aa).

S-adenosyl-L-methionine contacts are provided by residues 253 to 254 (GG), Asp278, 299 to 300 (DF), and Arg315. The active-site Proton acceptor is the His319.

Belongs to the class I-like SAM-binding methyltransferase superfamily. Cation-independent O-methyltransferase family. COMT subfamily.

It participates in secondary metabolite biosynthesis. Its function is as follows. O-methyltransferase; part of the gene cluster that mediates the biosynthesis of aflavarin, a bicoumarin that exhibits anti-insectan activity against the fungivorous beetle C.hemipterus. The polypeptide is O-methyltransferase afvC (Aspergillus flavus (strain ATCC 200026 / FGSC A1120 / IAM 13836 / NRRL 3357 / JCM 12722 / SRRC 167)).